The following is a 30-amino-acid chain: Cytochrome c oxidase subunit 5C (30 aa).

The helical transmembrane segment at 15 to 30 (VVKELVIXXXLGLXAG) threads the bilayer.

The protein belongs to the cytochrome c oxidase subunit 5C family.

It is found in the mitochondrion inner membrane. This protein is one of the nuclear-coded polypeptide chains of cytochrome c oxidase, the terminal oxidase in mitochondrial electron transport. This chain is Cytochrome c oxidase subunit 5C (COX5C), found in Solanum tuberosum (Potato).